Consider the following 292-residue polypeptide: Cytidine deaminase (292 aa).

CMP/dCMP-type deaminase domains follow at residues 47–167 (TPLK…FGPK) and 186–292 (DHQD…YYSL). Residue 88–90 (NQE) coordinates substrate. Histidine 101 serves as a coordination point for Zn(2+). The Proton donor role is filled by glutamate 103. Zn(2+)-binding residues include cysteine 128 and cysteine 131.

Belongs to the cytidine and deoxycytidylate deaminase family. Homodimer. Requires Zn(2+) as cofactor.

It catalyses the reaction cytidine + H2O + H(+) = uridine + NH4(+). The catalysed reaction is 2'-deoxycytidine + H2O + H(+) = 2'-deoxyuridine + NH4(+). Its function is as follows. This enzyme scavenges exogenous and endogenous cytidine and 2'-deoxycytidine for UMP synthesis. In Haemophilus influenzae (strain PittEE), this protein is Cytidine deaminase.